Here is a 208-residue protein sequence, read N- to C-terminus: FMN-dependent NADH:quinone oxidoreductase (208 aa).

Residues 17-19 (SNS), 99-102 (MWNL), and 143-146 (SRGG) each bind FMN.

The protein belongs to the azoreductase type 1 family. In terms of assembly, homodimer. The cofactor is FMN.

The catalysed reaction is 2 a quinone + NADH + H(+) = 2 a 1,4-benzosemiquinone + NAD(+). The enzyme catalyses N,N-dimethyl-1,4-phenylenediamine + anthranilate + 2 NAD(+) = 2-(4-dimethylaminophenyl)diazenylbenzoate + 2 NADH + 2 H(+). In terms of biological role, quinone reductase that provides resistance to thiol-specific stress caused by electrophilic quinones. Also exhibits azoreductase activity. Catalyzes the reductive cleavage of the azo bond in aromatic azo compounds to the corresponding amines. The chain is FMN-dependent NADH:quinone oxidoreductase from Staphylococcus aureus (strain bovine RF122 / ET3-1).